We begin with the raw amino-acid sequence, 201 residues long: MASKLRLGVAGPVGSGKTALVEALCRELCERLELAVVTNDIYTQEDAQFLTRAGVLPPERIRGVETGGCPHTAIREDCSINRAAVGDLEAQFPGLDLVLVESGGDNLAASFSPELVDLCIYVIDVAAGDKIPRKGGPGITRSDLLVINKIDLAPLVGADLSVMEHDTQRMRGDRPWCFTNLKNGVGLNQVVEFVLQQLPNV.

11–18 (GPVGSGKT) is a GTP binding site.

It belongs to the SIMIBI class G3E GTPase family. UreG subfamily. As to quaternary structure, homodimer. UreD, UreF and UreG form a complex that acts as a GTP-hydrolysis-dependent molecular chaperone, activating the urease apoprotein by helping to assemble the nickel containing metallocenter of UreC. The UreE protein probably delivers the nickel.

It is found in the cytoplasm. Facilitates the functional incorporation of the urease nickel metallocenter. This process requires GTP hydrolysis, probably effectuated by UreG. The polypeptide is Urease accessory protein UreG (Synechococcus sp. (strain CC9902)).